Here is a 119-residue protein sequence, read N- to C-terminus: uncharacterized protein (119 aa).

It to T.pallidum TP_0127, TP_0315 and TP_0619.

This is an uncharacterized protein from Treponema pallidum (strain Nichols).